The sequence spans 216 residues: Probable glutamine ABC transporter permease protein GlnM (216 aa).

One can recognise an ABC transmembrane type-1 domain in the interval 17 to 205 (FYHTLLASVI…VLTIPLSIGV (189 aa)). Transmembrane regions (helical) follow at residues 21 to 41 (LLAS…VAVM), 63 to 83 (IPLL…GLRL), 85 to 105 (GFQA…AEAI), 132 to 152 (LHII…NQFL), and 181 to 201 (LVVF…TIPL).

It belongs to the binding-protein-dependent transport system permease family. In terms of assembly, the complex is composed of two ATP-binding proteins (GlnQ), two transmembrane proteins (GlnM and GlnP) and a solute-binding protein (GlnH).

The protein localises to the cell membrane. Its function is as follows. Part of the ABC transporter complex GlnHMPQ involved in glutamine transport. Probably responsible for the translocation of the substrate across the membrane. The protein is Probable glutamine ABC transporter permease protein GlnM (glnM) of Bacillus subtilis (strain 168).